A 311-amino-acid chain; its full sequence is Probable lipid kinase YegS-like (311 aa).

Residues 9-140 (EHDGDTWLIL…VDVGTLGDDY (132 aa)) form the DAGKc domain. Residues Thr-47, 73–79 (GDGTVNE), and Ser-102 each bind ATP. Residues Lys-221, Asp-224, and Leu-226 each coordinate Mg(2+). Glu-281 functions as the Proton acceptor in the catalytic mechanism.

Belongs to the diacylglycerol/lipid kinase family. YegS lipid kinase subfamily. Mg(2+) is required as a cofactor. It depends on Ca(2+) as a cofactor.

It is found in the cytoplasm. In terms of biological role, probably phosphorylates lipids; the in vivo substrate is unknown. The chain is Probable lipid kinase YegS-like from Chromohalobacter salexigens (strain ATCC BAA-138 / DSM 3043 / CIP 106854 / NCIMB 13768 / 1H11).